Reading from the N-terminus, the 197-residue chain is Ubiquitin-conjugating enzyme E2 T (197 aa).

The UBC core domain maps to 2 to 152 (QRASRLKREL…ARQWTEKHAR (151 aa)). The active-site Glycyl thioester intermediate is the Cys-86. Residues Lys-91 and Lys-182 each participate in a glycyl lysine isopeptide (Lys-Gly) (interchain with G-Cter in ubiquitin) cross-link. A disordered region spans residues 149–197 (KHARQKQKADEEEMLDNLPEAGDSRVHNSTQKRKASQLVGIEKKFHPDV). Ser-184 bears the Phosphoserine mark. Glycyl lysine isopeptide (Lys-Gly) (interchain with G-Cter in SUMO2) cross-links involve residues Lys-191 and Lys-192.

The protein belongs to the ubiquitin-conjugating enzyme family. Directly interacts with FANCL. Interacts with BRCA1. Auto-ubiquitinated. Effects of auto-monoubiquitination at Lys-91 and Lys-182 are unclear: according to a report, monoubiquitination inactivates E2 enzyme activity. In contrast, according to another report, autoubiquitination does not affect E2 enzyme activity.

The protein resides in the nucleus. It catalyses the reaction S-ubiquitinyl-[E1 ubiquitin-activating enzyme]-L-cysteine + [E2 ubiquitin-conjugating enzyme]-L-cysteine = [E1 ubiquitin-activating enzyme]-L-cysteine + S-ubiquitinyl-[E2 ubiquitin-conjugating enzyme]-L-cysteine.. Its pathway is protein modification; protein ubiquitination. Its function is as follows. Accepts ubiquitin from the E1 complex and catalyzes its covalent attachment to other proteins. Catalyzes monoubiquitination. Involved in mitomycin-C (MMC)-induced DNA repair. Acts as a specific E2 ubiquitin-conjugating enzyme for the Fanconi anemia complex by associating with E3 ubiquitin-protein ligase FANCL and catalyzing monoubiquitination of FANCD2, a key step in the DNA damage pathway. Also mediates monoubiquitination of FANCL and FANCI. May contribute to ubiquitination and degradation of BRCA1. In vitro able to promote polyubiquitination using all 7 ubiquitin Lys residues, but may prefer 'Lys-11'-, 'Lys-27'-, 'Lys-48'- and 'Lys-63'-linked polyubiquitination. The protein is Ubiquitin-conjugating enzyme E2 T (UBE2T) of Homo sapiens (Human).